The sequence spans 109 residues: Spermidine export protein MdtI (109 aa).

4 helical membrane-spanning segments follow: residues Phe-6–Leu-26, Val-35–Ala-55, Ala-64–Phe-84, and Leu-88–Leu-108.

It belongs to the drug/metabolite transporter (DMT) superfamily. Small multidrug resistance (SMR) (TC 2.A.7.1) family. MdtI subfamily. As to quaternary structure, forms a complex with MdtJ.

Its subcellular location is the cell inner membrane. Its function is as follows. Catalyzes the excretion of spermidine. The sequence is that of Spermidine export protein MdtI from Yersinia enterocolitica serotype O:8 / biotype 1B (strain NCTC 13174 / 8081).